A 315-amino-acid polypeptide reads, in one-letter code: Malate dehydrogenase (315 aa).

Residues 11 to 16 (GAGHVG) and Asp-35 contribute to the NAD(+) site. Residues Arg-84 and Arg-90 each coordinate substrate. NAD(+) contacts are provided by residues Asn-97 and 120-122 (VTN). Substrate is bound by residues Asn-122 and Arg-153. Catalysis depends on His-177, which acts as the Proton acceptor.

This sequence belongs to the LDH/MDH superfamily. MDH type 3 family.

It carries out the reaction (S)-malate + NAD(+) = oxaloacetate + NADH + H(+). Catalyzes the reversible oxidation of malate to oxaloacetate. In Thermosulfidibacter takaii (strain DSM 17441 / JCM 13301 / NBRC 103674 / ABI70S6), this protein is Malate dehydrogenase.